The chain runs to 302 residues: tRNA-cytidine(32) 2-sulfurtransferase (302 aa).

The PP-loop motif motif lies at 44–49; the sequence is SGGKDS. 3 residues coordinate [4Fe-4S] cluster: C119, C122, and C210.

The protein belongs to the TtcA family. Homodimer. It depends on Mg(2+) as a cofactor. [4Fe-4S] cluster is required as a cofactor.

It is found in the cytoplasm. It carries out the reaction cytidine(32) in tRNA + S-sulfanyl-L-cysteinyl-[cysteine desulfurase] + AH2 + ATP = 2-thiocytidine(32) in tRNA + L-cysteinyl-[cysteine desulfurase] + A + AMP + diphosphate + H(+). It functions in the pathway tRNA modification. Catalyzes the ATP-dependent 2-thiolation of cytidine in position 32 of tRNA, to form 2-thiocytidine (s(2)C32). The sulfur atoms are provided by the cysteine/cysteine desulfurase (IscS) system. The protein is tRNA-cytidine(32) 2-sulfurtransferase of Teredinibacter turnerae (strain ATCC 39867 / T7901).